The sequence spans 124 residues: UPF0102 protein BL0935 (124 aa).

This sequence belongs to the UPF0102 family.

In Bifidobacterium longum (strain NCC 2705), this protein is UPF0102 protein BL0935.